Consider the following 79-residue polypeptide: Omega-phylotoxin-To1a (79 aa).

The N-terminal stretch at 1–21 (MKKTFCFILILVCIVLKSVNA) is a signal peptide. Residues 22–38 (EEEDNFEESSLEMETAR) constitute a propeptide that is removed on maturation. 4 disulfides stabilise this stretch: Cys-39–Cys-59, Cys-46–Cys-63, Cys-58–Cys-78, and Cys-65–Cys-76.

Expressed by the venom duct.

Its subcellular location is the secreted. In terms of biological role, insect-specific toxin that probably acts as an inhibitor of presynaptic insect calcium channels, presumably Cav2 subtype. In vivo, induces immediate paralysis on insects, followed by death when high doses are injected. In Tibellus oblongus (Oblong running crab spider), this protein is Omega-phylotoxin-To1a.